The primary structure comprises 221 residues: UPF0758 protein KPN78578_39390 (221 aa).

The MPN domain maps to 99–221 (ALVTPSMTRE…YVSFAERGWI (123 aa)). His-170, His-172, and Asp-183 together coordinate Zn(2+). The short motif at 170-183 (HNHPSGSPEPSQAD) is the JAMM motif element.

This sequence belongs to the UPF0758 family. YicR subfamily.

The polypeptide is UPF0758 protein KPN78578_39390 (Klebsiella pneumoniae subsp. pneumoniae (strain ATCC 700721 / MGH 78578)).